A 341-amino-acid polypeptide reads, in one-letter code: Methionine import ATP-binding protein MetN 2 (341 aa).

Residues 2–241 (IEASELTKVY…PKAPLTQEFI (240 aa)) enclose the ABC transporter domain. 38-45 (GYSGAGKS) provides a ligand contact to ATP.

Belongs to the ABC transporter superfamily. Methionine importer (TC 3.A.1.24) family. The complex is composed of two ATP-binding proteins (MetN), two transmembrane proteins (MetI) and a solute-binding protein (MetQ).

Its subcellular location is the cell membrane. The catalysed reaction is L-methionine(out) + ATP + H2O = L-methionine(in) + ADP + phosphate + H(+). The enzyme catalyses D-methionine(out) + ATP + H2O = D-methionine(in) + ADP + phosphate + H(+). In terms of biological role, part of the ABC transporter complex MetNIQ involved in methionine import. Responsible for energy coupling to the transport system. The protein is Methionine import ATP-binding protein MetN 2 of Shouchella clausii (strain KSM-K16) (Alkalihalobacillus clausii).